The sequence spans 495 residues: uncharacterized protein (495 aa).

The TRAM domain occupies 16–74 (SSKRGDLIELAVTALDEDGNGIGTHDGTNVHVIGALPDERVRARLTHVGKRHLHAEAVE). [4Fe-4S] cluster is bound by residues Cys88, Cys94, Cys97, and Cys175. Gln299, Tyr328, Glu349, and Asn397 together coordinate S-adenosyl-L-methionine. Residue Cys424 is the Nucleophile of the active site. The span at 472 to 483 (DRLESPAKERSR) shows a compositional bias: basic and acidic residues. Residues 472–495 (DRLESPAKERSRPRASHKAKGGAV) are disordered. Basic residues predominate over residues 484–495 (PRASHKAKGGAV).

Belongs to the class I-like SAM-binding methyltransferase superfamily. RNA M5U methyltransferase family.

This is an uncharacterized protein from Geobacter sulfurreducens (strain ATCC 51573 / DSM 12127 / PCA).